A 310-amino-acid polypeptide reads, in one-letter code: Transcription initiation factor IIB (310 aa).

The segment at Asp9–Asp41 adopts a TFIIB-type zinc-finger fold. Residues Cys14, Cys17, Cys33, and Cys36 each contribute to the Zn(2+) site. 2 consecutive repeat copies span residues Ser127–Leu210 and Asp221–Glu302.

It belongs to the TFIIB family.

Its function is as follows. Stabilizes TBP binding to an archaeal box-A promoter. Also responsible for recruiting RNA polymerase II to the pre-initiation complex (DNA-TBP-TFIIB). This Methanobrevibacter smithii (strain ATCC 35061 / DSM 861 / OCM 144 / PS) protein is Transcription initiation factor IIB.